The following is a 366-amino-acid chain: tRNA/tmRNA (uracil-C(5))-methyltransferase (366 aa).

S-adenosyl-L-methionine is bound by residues Gln-190, Tyr-218, Asn-223, Glu-239, and Asp-299. The active-site Nucleophile is the Cys-324. The active-site Proton acceptor is Glu-358.

It belongs to the class I-like SAM-binding methyltransferase superfamily. RNA M5U methyltransferase family. TrmA subfamily.

The enzyme catalyses uridine(54) in tRNA + S-adenosyl-L-methionine = 5-methyluridine(54) in tRNA + S-adenosyl-L-homocysteine + H(+). It catalyses the reaction uridine(341) in tmRNA + S-adenosyl-L-methionine = 5-methyluridine(341) in tmRNA + S-adenosyl-L-homocysteine + H(+). Its function is as follows. Dual-specificity methyltransferase that catalyzes the formation of 5-methyluridine at position 54 (m5U54) in all tRNAs, and that of position 341 (m5U341) in tmRNA (transfer-mRNA). The protein is tRNA/tmRNA (uracil-C(5))-methyltransferase of Salmonella paratyphi A (strain ATCC 9150 / SARB42).